The following is a 358-amino-acid chain: Isopentenyl-diphosphate delta-isomerase (358 aa).

12-13 (RK) provides a ligand contact to substrate. FMN is bound by residues 69-71 (AMT), serine 99, and asparagine 128. Glutamine 158 is a binding site for substrate. Mg(2+) is bound at residue glutamate 159. FMN contacts are provided by residues lysine 190, threonine 220, 267–269 (GIR), and 288–289 (AG).

It belongs to the IPP isomerase type 2 family. Homooctamer. Dimer of tetramers. FMN is required as a cofactor. Requires NADPH as cofactor. It depends on Mg(2+) as a cofactor.

It localises to the cytoplasm. It catalyses the reaction isopentenyl diphosphate = dimethylallyl diphosphate. Functionally, involved in the biosynthesis of isoprenoids. Catalyzes the 1,3-allylic rearrangement of the homoallylic substrate isopentenyl (IPP) to its allylic isomer, dimethylallyl diphosphate (DMAPP). This Listeria monocytogenes serovar 1/2a (strain ATCC BAA-679 / EGD-e) protein is Isopentenyl-diphosphate delta-isomerase.